The chain runs to 619 residues: Chaperone protein HscA homolog (619 aa).

This sequence belongs to the heat shock protein 70 family.

Functionally, chaperone involved in the maturation of iron-sulfur cluster-containing proteins. Has a low intrinsic ATPase activity which is markedly stimulated by HscB. This chain is Chaperone protein HscA homolog, found in Pseudomonas paraeruginosa (strain DSM 24068 / PA7) (Pseudomonas aeruginosa (strain PA7)).